A 185-amino-acid polypeptide reads, in one-letter code: Serine/arginine-rich splicing factor RSZ21A (185 aa).

Residues 2–73 form the RRM domain; sequence ARVYVGNLDP…WRVELSRNAS (72 aa). The CCHC-type zinc-finger motif lies at 87–104; the sequence is SKCYECGETGHFARECRL. The segment at 109-185 is disordered; it reads GGLGSGRRRS…YDNGYRRSRS (77 aa). Residues 114-131 show a composition bias toward basic residues; that stretch reads GRRRSRSRSRSRSPRYRR. Composition is skewed to low complexity over residues 132–145 and 152–163; these read SPSY…PAGR and VSPARARSYSRS.

Belongs to the splicing factor SR family. Extensively phosphorylated on serine residues in the RS domain. As to expression, expressed in roots, leaves and immature seeds.

Its subcellular location is the nucleus. In terms of biological role, involved in pre-mRNA splicing. The chain is Serine/arginine-rich splicing factor RSZ21A (RSZ21A) from Oryza sativa subsp. japonica (Rice).